Here is a 263-residue protein sequence, read N- to C-terminus: H-2 class II histocompatibility antigen, A-K beta chain (263 aa).

An N-terminal signal peptide occupies residues 1–27 (MALQIPSLLLLAAVVVLTVLSSPGTEG). Positions 28-120 (GNSERHFVHQ…TETPTSLRRL (93 aa)) are beta-1. The Extracellular portion of the chain corresponds to 28-224 (GNSERHFVHQ…RAQSESARSK (197 aa)). Cystine bridges form between C42–C104 and C143–C199. Residue N46 is glycosylated (N-linked (GlcNAc...) asparagine). The segment at 121–214 (EQPSVVISLS…SLKSPITVEW (94 aa)) is beta-2. The region spanning 123 to 211 (PSVVISLSRT…EHPSLKSPIT (89 aa)) is the Ig-like C1-type domain. Residues 215–224 (RAQSESARSK) form a connecting peptide region. The chain crosses the membrane as a helical span at residues 225-245 (MLSGIGGCVLGVIFLGLGLFI). Residues 246–263 (RHRSQKGPRGPPPAGLLQ) lie on the Cytoplasmic side of the membrane.

The protein belongs to the MHC class II family. Post-translationally, ubiquitinated in immature dendritic cells leading to down-regulation of MHC class II.

It localises to the membrane. This Mus musculus (Mouse) protein is H-2 class II histocompatibility antigen, A-K beta chain (H2-Ab1).